The following is a 1389-amino-acid chain: uncharacterized protein (1389 aa).

Residues 43 to 94 (STIAQRVSQLENEVAEINVALAEHVNELNSQEKRIDKLEKTVKKKKSNCSDD) adopt a coiled-coil conformation. The tract at residues 294 to 353 (HKNRRSKSDNSDLSEYSSSNSDDSECTDSDGSSCSTDGSPDCTESENTESHRSHGKKKHR) is disordered. Low complexity-rich tracts occupy residues 304 to 314 (SDLSEYSSSNS) and 322 to 335 (SDGSSCSTDGSPDC). 3 WD repeats span residues 867–907 (TFTD…VKHI), 1017–1056 (GYNEGLDIKYSPDQTIVVSGYYNTNPLIIYDGPDGLTPSG), and 1115–1156 (GISN…ILST).

The protein localises to the virion. This is an uncharacterized protein from Acanthamoeba polyphaga (Amoeba).